We begin with the raw amino-acid sequence, 40 residues long: uncharacterized protein (40 aa).

This is an uncharacterized protein from Acheta domesticus (House cricket).